The chain runs to 164 residues: MLNLFRQSGLRFLWLAVVVFVIDQVTKHWIVANLEPYQAIQYTSFFNLTHVYNYGAAFSFLSDAGGWQRWLFTGIAIAVCGLVTWWLKETTRQQVMLPVAFCLIIGGALGNVFDRLLHGFVIDFLVLYYQDWYWPAFNVADSAICLGAFLLVIDMFKNKDNVNE.

3 helical membrane passes run 12-32, 70-90, and 93-113; these read FLWL…WIVA, WLFT…LKET, and QQVM…GNVF. Residues D123 and D141 contribute to the active site. The helical transmembrane segment at 133–153 threads the bilayer; sequence YWPAFNVADSAICLGAFLLVI.

It belongs to the peptidase A8 family.

The protein resides in the cell inner membrane. It catalyses the reaction Release of signal peptides from bacterial membrane prolipoproteins. Hydrolyzes -Xaa-Yaa-Zaa-|-(S,diacylglyceryl)Cys-, in which Xaa is hydrophobic (preferably Leu), and Yaa (Ala or Ser) and Zaa (Gly or Ala) have small, neutral side chains.. Its pathway is protein modification; lipoprotein biosynthesis (signal peptide cleavage). This protein specifically catalyzes the removal of signal peptides from prolipoproteins. This chain is Lipoprotein signal peptidase, found in Pseudoalteromonas atlantica (strain T6c / ATCC BAA-1087).